The chain runs to 341 residues: Shk1 kinase-binding protein 15 (341 aa).

5 WD repeats span residues 33-70, 77-114, 119-157, 197-234, and 237-274; these read AHEGALTALAVDGIYLASTSSDETIKIFDHTRNVQIAD, IANACIRDMCFTKNHLLACHDNGQISMWSKGSWLLVHT, SHKGITGIAVHPSEKLALTVGGDGKLRLWDLVRGKGGKV, SSKSQLNALCLYQSKLIVGRDNGTVLVLDTSDGKILHE, and AHKKRVKSVYPVDDYLITASSDGSVCIWDKDWNLVIEH. Residues 293-341 form a disordered region; that stretch reads NSEPKNVEDEAAKRQSLDSETSETSSESESESEYYSTSKQPPVKRTKHA. Over residues 297–309 the composition is skewed to basic and acidic residues; sequence KNVEDEAAKRQSL.

Negatively regulates pak1/shk1 kinase activity leading to proper execution of cytoskeletal remodeling and cytokinetic functions. Functionally, interacts with pak1/shk1. In Schizosaccharomyces pombe (strain 972 / ATCC 24843) (Fission yeast), this protein is Shk1 kinase-binding protein 15 (skb15).